Here is a 428-residue protein sequence, read N- to C-terminus: Histidine--tRNA ligase (428 aa).

This sequence belongs to the class-II aminoacyl-tRNA synthetase family. In terms of assembly, homodimer.

It is found in the cytoplasm. It carries out the reaction tRNA(His) + L-histidine + ATP = L-histidyl-tRNA(His) + AMP + diphosphate + H(+). This Azotobacter vinelandii (strain DJ / ATCC BAA-1303) protein is Histidine--tRNA ligase.